The sequence spans 125 residues: Histone H1-like protein Hc1 (125 aa).

The segment at 98 to 125 is disordered; that stretch reads TKAKVKPTKKAAPKTKVKTAKKTRSTKK. The segment covering 100-125 has biased composition (basic residues); it reads AKVKPTKKAAPKTKVKTAKKTRSTKK.

It belongs to the histone H1/H5 family. HCT subfamily.

In terms of biological role, might have a role analogous to that of eukaryotic histone proteins. The polypeptide is Histone H1-like protein Hc1 (hctA) (Chlamydia trachomatis serovar D (strain ATCC VR-885 / DSM 19411 / UW-3/Cx)).